We begin with the raw amino-acid sequence, 197 residues long: uncharacterized protein (197 aa).

An SIS domain is found at 33–184 (MISKIMDASS…IAEFMSILGK (152 aa)).

It belongs to the SIS family. PHI subfamily.

This is an uncharacterized protein from Methanothermobacter thermautotrophicus (strain ATCC 29096 / DSM 1053 / JCM 10044 / NBRC 100330 / Delta H) (Methanobacterium thermoautotrophicum).